The following is a 299-amino-acid chain: Lathosterol oxidase (299 aa).

Helical transmembrane passes span 32-52 (ISLLIVTNLGAYILYFFCATL), 79-99 (FTVKSLPWISIPTVSLFLLEL), and 117-137 (IHLMVSVVSFLFFTDMLIYWI). A Fatty acid hydroxylase domain is found at 124–252 (VSFLFFTDML…YFTLWDRIGG (129 aa)). A Histidine box-1 motif is present at residues 138 to 143 (HRGLHH). The short motif at 151–155 (HKPHH) is the Histidine box-2 element. Residues 186–206 (VFPLHKVVYLGLYVLVNVWTI) form a helical membrane-spanning segment. Positions 228–233 (HHTDHH) match the Histidine box-3 motif. Residue serine 253 is modified to Phosphoserine. Residues 280–299 (FAENGCKGKKVGNGEFTKNK) are disordered.

It belongs to the sterol desaturase family. Fe cation serves as cofactor.

The protein resides in the endoplasmic reticulum membrane. The catalysed reaction is a Delta(7)-sterol + 2 Fe(II)-[cytochrome b5] + O2 + 2 H(+) = a Delta(5),Delta(7)-sterol + 2 Fe(III)-[cytochrome b5] + 2 H2O. The enzyme catalyses lathosterol + 2 Fe(II)-[cytochrome b5] + O2 + 2 H(+) = 7-dehydrocholesterol + 2 Fe(III)-[cytochrome b5] + 2 H2O. It carries out the reaction 5alpha-cholesta-7,24-dien-3beta-ol + 2 Fe(II)-[cytochrome b5] + O2 + 2 H(+) = 7-dehydrodesmosterol + 2 Fe(III)-[cytochrome b5] + 2 H2O. Its pathway is steroid biosynthesis; cholesterol biosynthesis. Its function is as follows. Catalyzes the penultimate step of the biosynthesis of cholesterol, the dehydrogenation of lathosterol into 7-dehydrocholesterol (7-DHC). Cholesterol is the major sterol component in mammalian membranes and a precursor for bile acid and steroid hormone synthesis. In addition to its essential role in cholesterol biosynthesis, it also indirectly regulates ferroptosis through the production of 7-DHC. By diverting the spread of damage caused by peroxyl radicals from the phospholipid components to its sterol nucleus, 7-DHC prevents this form of cell death. In Mus musculus (Mouse), this protein is Lathosterol oxidase.